A 255-amino-acid polypeptide reads, in one-letter code: MDELEIGGVKLDSRLFVGTGKLASNEVIPKIMEKSNSKVITVALRRVDITSKQDNILNFIDKDLILLPNTSGARNAEEAIRLARIAKAAGCGNWIKIEVISDNKYLLPDNYETIKATEALVKEGFIVLPYVNPDLMDARRLVNVGAAAVMPLGAPIGSNRGLRTKEMLKILIEEINEVPVVVDAGIGKPSDAAMAMEMGADAVLVNTAIATADNPVLMAEAFSLAVKAGRMAYVAKIGEEKEYASASSPLTGFLR.

The Schiff-base intermediate with DXP role is filled by Lys-96. 1-deoxy-D-xylulose 5-phosphate-binding positions include Gly-157, 184–185, and 206–207; these read AG and NT.

This sequence belongs to the ThiG family. As to quaternary structure, homotetramer. Forms heterodimers with either ThiH or ThiS.

The protein localises to the cytoplasm. The enzyme catalyses [ThiS sulfur-carrier protein]-C-terminal-Gly-aminoethanethioate + 2-iminoacetate + 1-deoxy-D-xylulose 5-phosphate = [ThiS sulfur-carrier protein]-C-terminal Gly-Gly + 2-[(2R,5Z)-2-carboxy-4-methylthiazol-5(2H)-ylidene]ethyl phosphate + 2 H2O + H(+). It participates in cofactor biosynthesis; thiamine diphosphate biosynthesis. Catalyzes the rearrangement of 1-deoxy-D-xylulose 5-phosphate (DXP) to produce the thiazole phosphate moiety of thiamine. Sulfur is provided by the thiocarboxylate moiety of the carrier protein ThiS. In vitro, sulfur can be provided by H(2)S. This Clostridium acetobutylicum (strain ATCC 824 / DSM 792 / JCM 1419 / IAM 19013 / LMG 5710 / NBRC 13948 / NRRL B-527 / VKM B-1787 / 2291 / W) protein is Thiazole synthase.